We begin with the raw amino-acid sequence, 200 residues long: Ribosomal RNA large subunit methyltransferase E (200 aa).

S-adenosyl-L-methionine contacts are provided by glycine 49, tryptophan 51, aspartate 69, aspartate 87, and aspartate 111. Lysine 151 functions as the Proton acceptor in the catalytic mechanism.

It belongs to the class I-like SAM-binding methyltransferase superfamily. RNA methyltransferase RlmE family.

The protein localises to the cytoplasm. It catalyses the reaction uridine(2552) in 23S rRNA + S-adenosyl-L-methionine = 2'-O-methyluridine(2552) in 23S rRNA + S-adenosyl-L-homocysteine + H(+). Specifically methylates the uridine in position 2552 of 23S rRNA at the 2'-O position of the ribose in the fully assembled 50S ribosomal subunit. The chain is Ribosomal RNA large subunit methyltransferase E from Lawsonia intracellularis (strain PHE/MN1-00).